A 433-amino-acid chain; its full sequence is uncharacterized protein (433 aa).

Positions 61–178 (RFNHSLGVYE…QIDADRMDYL (118 aa)) constitute an HD domain.

This is an uncharacterized protein from Bacillus subtilis (strain 168).